The chain runs to 212 residues: Cytochrome c biogenesis ATP-binding export protein CcmA (212 aa).

The region spanning 8 to 212 (LQATALACER…RSIDLAKGSA (205 aa)) is the ABC transporter domain. 40 to 47 (GPNGSGKT) contributes to the ATP binding site.

The protein belongs to the ABC transporter superfamily. CcmA exporter (TC 3.A.1.107) family. In terms of assembly, the complex is composed of two ATP-binding proteins (CcmA) and two transmembrane proteins (CcmB).

The protein resides in the cell inner membrane. The enzyme catalyses heme b(in) + ATP + H2O = heme b(out) + ADP + phosphate + H(+). Part of the ABC transporter complex CcmAB involved in the biogenesis of c-type cytochromes; once thought to export heme, this seems not to be the case, but its exact role is uncertain. Responsible for energy coupling to the transport system. In Pseudomonas syringae pv. tomato (strain ATCC BAA-871 / DC3000), this protein is Cytochrome c biogenesis ATP-binding export protein CcmA.